The sequence spans 524 residues: Bifunctional purine biosynthesis protein PurH (524 aa).

The MGS-like domain maps to 1–145 (MIQQALLSVS…KNHRDVTVIV (145 aa)).

It belongs to the PurH family.

It catalyses the reaction (6R)-10-formyltetrahydrofolate + 5-amino-1-(5-phospho-beta-D-ribosyl)imidazole-4-carboxamide = 5-formamido-1-(5-phospho-D-ribosyl)imidazole-4-carboxamide + (6S)-5,6,7,8-tetrahydrofolate. The catalysed reaction is IMP + H2O = 5-formamido-1-(5-phospho-D-ribosyl)imidazole-4-carboxamide. Its pathway is purine metabolism; IMP biosynthesis via de novo pathway; 5-formamido-1-(5-phospho-D-ribosyl)imidazole-4-carboxamide from 5-amino-1-(5-phospho-D-ribosyl)imidazole-4-carboxamide (10-formyl THF route): step 1/1. The protein operates within purine metabolism; IMP biosynthesis via de novo pathway; IMP from 5-formamido-1-(5-phospho-D-ribosyl)imidazole-4-carboxamide: step 1/1. This chain is Bifunctional purine biosynthesis protein PurH, found in Ralstonia pickettii (strain 12J).